The primary structure comprises 597 residues: Protein unc-93 homolog B1 (597 aa).

Residues methionine 1–proline 29 form a disordered region. 5 helical membrane passes run valine 64 to methionine 84, lysine 110 to isoleucine 130, phenylalanine 132 to threonine 152, threonine 160 to glycine 180, and isoleucine 223 to leucine 243. N-linked (GlcNAc...) asparagine glycosylation is found at asparagine 251 and asparagine 272. 5 helical membrane passes run leucine 285–glycine 305, leucine 343–leucine 363, leucine 378–tryptophan 398, valine 403–alanine 423, and valine 428–leucine 448. Asparagine 449 carries an N-linked (GlcNAc...) asparagine glycan. The next 2 helical transmembrane spans lie at phenylalanine 469–serine 489 and leucine 491–tyrosine 511. A disordered region spans residues valine 522 to glutamine 597. Serine 547 and serine 550 each carry phosphoserine.

It belongs to the unc-93 family. Interacts with TLR3, TLR5, TLR7, and TLR9 (probably via transmembrane domain). In terms of processing, N-glycosylated. Expressed in plasmocytoid dendritic cells (at protein level). Highly expressed in antigen-presenting cells. Expressed in heart, and at lower level in kidney. Expressed at low level in other tissues.

It is found in the endoplasmic reticulum membrane. The protein localises to the endosome. Its subcellular location is the lysosome. It localises to the cytoplasmic vesicle. The protein resides in the phagosome. Its function is as follows. Plays an important role in innate and adaptive immunity by regulating nucleotide-sensing Toll-like receptor (TLR) signaling. Required for the transport of a subset of TLRs (including TLR3, TLR7 and TLR9) from the endoplasmic reticulum to endolysosomes where they can engage pathogen nucleotides and activate signaling cascades. May play a role in autoreactive B-cells removal. The chain is Protein unc-93 homolog B1 from Homo sapiens (Human).